We begin with the raw amino-acid sequence, 231 residues long: Insertion sequence IS1162 putative ATP-binding protein (231 aa).

107 to 114 (GPTGVGKT) is an ATP binding site.

The protein belongs to the IS21/IS1162 putative ATP-binding protein family.

The protein is Insertion sequence IS1162 putative ATP-binding protein of Pseudomonas fluorescens.